Here is a 484-residue protein sequence, read N- to C-terminus: Arginine ADP-riboxanase OspC2 (484 aa).

Positions 143, 144, 145, 149, 162, 172, 188, 206, 211, 231, and 326 each coordinate NAD(+). The active site involves Glu326. ANK repeat units lie at residues 414–444 (LYDV…DVNK) and 451–480 (SGDT…VSGK).

Belongs to the OspC family.

The protein resides in the secreted. It catalyses the reaction L-arginyl-[protein] + NAD(+) = ADP-riboxanated L-argininyl-[protein] + nicotinamide + NH4(+) + H(+). Functionally, ADP-riboxanase effector that mediates arginine ADP-riboxanation of host caspases. ADP-riboxanation of host apoptotic caspases (CASP3 and CASP9) prevents their activation, thereby inhibiting host cell extrinsic and intrinsic apoptosis. Does not catalyze ADP-riboxanation of host CASP4/CASP11 or CASP8. In contrast to Ospc1 and OspC3, not able to inactivate host calmodulin. In Shigella flexneri, this protein is Arginine ADP-riboxanase OspC2.